A 100-amino-acid chain; its full sequence is Large ribosomal subunit protein uL23 (100 aa).

This sequence belongs to the universal ribosomal protein uL23 family. Part of the 50S ribosomal subunit. Contacts protein L29, and trigger factor when it is bound to the ribosome.

Functionally, one of the early assembly proteins it binds 23S rRNA. One of the proteins that surrounds the polypeptide exit tunnel on the outside of the ribosome. Forms the main docking site for trigger factor binding to the ribosome. The protein is Large ribosomal subunit protein uL23 of Shewanella oneidensis (strain ATCC 700550 / JCM 31522 / CIP 106686 / LMG 19005 / NCIMB 14063 / MR-1).